The sequence spans 334 residues: 3-ketodihydrosphingosine reductase (334 aa).

Residues 1–20 (MIIYILFSLLAAVIVHLVYK) form the signal peptide. NADPH contacts are provided by glycine 36, serine 38, serine 39, glycine 40, arginine 62, lysine 66, aspartate 100, and isoleucine 101. The GXSXG motif lies at 36–40 (GGSSG). The Proton donor role is filled by serine 182. Tyrosine 196 serves as the catalytic Proton acceptor. The NADP(+) site is built by tyrosine 196 and lysine 200. Residue lysine 200 is the Lowers pKa of active site Tyr of the active site.

The protein belongs to the short-chain dehydrogenases/reductases (SDR) family.

The protein resides in the endoplasmic reticulum. The enzyme catalyses sphinganine + NADP(+) = 3-oxosphinganine + NADPH + H(+). It participates in lipid metabolism; sphingolipid metabolism. Functionally, catalyzes the reduction of 3'-oxosphinganine (3-ketodihydrosphingosine/KDS) to sphinganine (dihydrosphingosine/DHS), the second step of de novo sphingolipid biosynthesis. In Dictyostelium discoideum (Social amoeba), this protein is 3-ketodihydrosphingosine reductase (ksrA-1).